Reading from the N-terminus, the 604-residue chain is Elongation factor 4 (604 aa).

In terms of domain architecture, tr-type G spans 8-190 (KNKRNFSIIA…AIVHRIPAPN (183 aa)). GTP-binding positions include 20-25 (DHGKST) and 137-140 (NKID).

It belongs to the TRAFAC class translation factor GTPase superfamily. Classic translation factor GTPase family. LepA subfamily.

Its subcellular location is the cell inner membrane. It catalyses the reaction GTP + H2O = GDP + phosphate + H(+). Functionally, required for accurate and efficient protein synthesis under certain stress conditions. May act as a fidelity factor of the translation reaction, by catalyzing a one-codon backward translocation of tRNAs on improperly translocated ribosomes. Back-translocation proceeds from a post-translocation (POST) complex to a pre-translocation (PRE) complex, thus giving elongation factor G a second chance to translocate the tRNAs correctly. Binds to ribosomes in a GTP-dependent manner. The protein is Elongation factor 4 of Fusobacterium nucleatum subsp. nucleatum (strain ATCC 25586 / DSM 15643 / BCRC 10681 / CIP 101130 / JCM 8532 / KCTC 2640 / LMG 13131 / VPI 4355).